A 620-amino-acid chain; its full sequence is Acetylcholinesterase 1 (620 aa).

The first 31 residues, 1–31 (MRNSLLFFIFLPSTILAVDLIHLHDGSPLFG), serve as a signal peptide directing secretion. A glycan (N-linked (GlcNAc...) asparagine) is linked at Asn-74. The cysteines at positions 82 and 109 are disulfide-linked. Ser-216 acts as the Acyl-ester intermediate in catalysis. Cys-270 and Cys-286 form a disulfide bridge. A glycan (N-linked (GlcNAc...) asparagine) is linked at Asn-272. Active-site charge relay system residues include Glu-346 and His-468. Cysteines 430 and 558 form a disulfide. N-linked (GlcNAc...) asparagine glycans are attached at residues Asn-486 and Asn-536.

This sequence belongs to the type-B carboxylesterase/lipase family. Oligomer composed of disulfide-linked homodimers.

The protein resides in the synapse. It is found in the secreted. The protein localises to the cell membrane. The enzyme catalyses acetylcholine + H2O = choline + acetate + H(+). In terms of biological role, rapidly hydrolyzes acetylcholine and releases choline into the synapse. It can hydrolyze propionylcholine and butyrylthiocholine in vitro. This is Acetylcholinesterase 1 (ace-1) from Caenorhabditis elegans.